The primary structure comprises 439 residues: Xylose isomerase (439 aa).

Residues His-101 and Asp-104 contribute to the active site. Residues Glu-232, Glu-268, His-271, Asp-296, Asp-307, Asp-309, and Asp-339 each contribute to the Mg(2+) site.

The protein belongs to the xylose isomerase family. As to quaternary structure, homotetramer. Mg(2+) is required as a cofactor.

It localises to the cytoplasm. The catalysed reaction is alpha-D-xylose = alpha-D-xylulofuranose. The protein is Xylose isomerase (xylA) of Lactococcus lactis subsp. lactis (strain IL1403) (Streptococcus lactis).